We begin with the raw amino-acid sequence, 332 residues long: Adenosine receptor A2b (332 aa).

The Extracellular portion of the chain corresponds to 1–8 (MQLETQDA). Residues 9-33 (LYVALELAIAALSVAGNVLVCAAVG) traverse the membrane as a helical segment. At 34 to 43 (TSSALQTPTN) the chain is on the cytoplasmic side. A helical membrane pass occupies residues 44–67 (YFLVSLAAADVAVGLFAIPFAITI). Over 68–78 (SLGFCTDFHSC) the chain is Extracellular. An intrachain disulfide couples C78 to C170. The chain crosses the membrane as a helical span at residues 79 to 101 (LFLACFVLVLTQSSIFSLLAVAV). Residues 102 to 121 (DRYLAIRVPLRYKSLVTGTR) are Cytoplasmic-facing. Residues 122 to 144 (ARGVIAVLWVLAFGIGLTPFLGW) form a helical membrane-spanning segment. Residues 145–177 (NSKDSATNCTEPWDGTTNESCCLVKCLFENVVP) are Extracellular-facing. 2 N-linked (GlcNAc...) asparagine glycosylation sites follow: N152 and N162. E173 contacts adenosine. Residues 178–202 (MSYMVYFNFFGCVLPPLLIMLVIYI) traverse the membrane as a helical segment. Residues 203–234 (KIFMVACKQLQRTELVDHSRTVIQREIHAAKS) are Cytoplasmic-facing. A helical membrane pass occupies residues 235–258 (LAMIVGIFALCWLPVHAINCVTLF). An adenosine-binding site is contributed by N253. Over 259 to 266 (QPARAKDK) the chain is Extracellular. Residues 267–290 (PKWAMNMAILLSHASSVVNPIVYA) traverse the membrane as a helical segment. Adenosine contacts are provided by S278 and H279. Residues 291-332 (YRNRDFRYTFHKIISRYVLCQTDVLKSGNGQAGTQSALDVGL) are Cytoplasmic-facing. C310 carries S-palmitoyl cysteine lipidation.

The protein belongs to the G-protein coupled receptor 1 family.

It localises to the cell membrane. Its function is as follows. Receptor for adenosine. The activity of this receptor is mediated by G proteins which activate adenylyl cyclase. The sequence is that of Adenosine receptor A2b (ADORA2B) from Canis lupus familiaris (Dog).